The following is a 222-amino-acid chain: Ribonuclease S-3 (222 aa).

A signal peptide spans 1–22; it reads MFRLQLISAFFILLFSLSPVSA. Cys-38 and Cys-44 are oxidised to a cystine. Asn-50 is a glycosylation site (N-linked (GlcNAc...) asparagine). Residue His-54 is the Proton donor of the active site. RNA-binding positions include His-54, 92-93, 109-110, and 113-114; these read QM, HE, and RH. Cystine bridges form between Cys-68–Cys-117, Cys-177–Cys-210, and Cys-193–Cys-204. Glu-110 is a catalytic residue. His-114 acts as the Proton acceptor in catalysis.

This sequence belongs to the RNase T2 family.

The protein resides in the secreted. It is found in the extracellular space. It catalyses the reaction a ribonucleotidyl-ribonucleotide-RNA + H2O = a 3'-end 3'-phospho-ribonucleotide-RNA + a 5'-end dephospho-ribonucleoside-RNA + H(+). Self-incompatibility (SI) is the inherited ability of a flowering plant to prevent self-fertilization by discriminating between self and non-self pollen during pollination. In many species, self-incompatibility is controlled by the single, multiallelic locus S. This is Ribonuclease S-3 (S3) from Petunia hybrida (Petunia).